The chain runs to 214 residues: MRIILLGAPGAGKGTQAQFIVEKYGIPQISTGDMLRSAVKAGTELGLKAKALMDHGKLVTDELVIALVKERIKQDDCRNGFLLDGFPRTIPQADAMKEAGINVDYVLEFDVPDELIIERIIGRRIHAPSGRVYHIKFNPPVVENKDDVTGEELTVRKDDHEDIVRKRLVEYHQQTAPLVSYYQKEAEADYTKYFGIDGTRKVSEISEELSKILD.

10–15 contributes to the ATP binding site; that stretch reads GAGKGT. The segment at 30–59 is NMP; sequence STGDMLRSAVKAGTELGLKAKALMDHGKLV. Residues Thr31, Arg36, 57–59, 85–88, and Gln92 contribute to the AMP site; these read KLV and GFPR. The interval 122–159 is LID; that stretch reads GRRIHAPSGRVYHIKFNPPVVENKDDVTGEELTVRKDD. ATP-binding positions include Arg123 and 132–133; that span reads VY. 2 residues coordinate AMP: Arg156 and Arg167. Arg200 provides a ligand contact to ATP.

It belongs to the adenylate kinase family. As to quaternary structure, monomer.

It localises to the cytoplasm. It catalyses the reaction AMP + ATP = 2 ADP. It participates in purine metabolism; AMP biosynthesis via salvage pathway; AMP from ADP: step 1/1. Its function is as follows. Catalyzes the reversible transfer of the terminal phosphate group between ATP and AMP. Plays an important role in cellular energy homeostasis and in adenine nucleotide metabolism. The sequence is that of Adenylate kinase from Photorhabdus laumondii subsp. laumondii (strain DSM 15139 / CIP 105565 / TT01) (Photorhabdus luminescens subsp. laumondii).